Reading from the N-terminus, the 1227-residue chain is Anion exchange protein 3 (1227 aa).

The segment covering 1-11 has biased composition (pro residues); sequence MANGVIPPPGG. Disordered stretches follow at residues 1–256, 286–312, and 428–497; these read MANG…DEAE, KPSRIQGGRGSPSGLAPILRRKKKKKK, and NDDK…GDGH. Residues 1–707 lie on the Cytoplasmic side of the membrane; that stretch reads MANGVIPPPG…DLRDALHSQC (707 aa). Positions 58–75 are enriched in basic and acidic residues; it reads DPEKPSRSYSERDFEFHR. Basic residues-rich tracts occupy residues 76-97 and 104-113; these read HTSHHTHHPLSARLPPPHKLRR and RHTRRKRKKE. Residues 134 to 152 are compositionally biased toward acidic residues; that stretch reads AEEEEEEEEEEEGESEAEP. A phosphoserine mark is found at Ser167, Ser170, Ser175, and Ser198. Over residues 194–215 the composition is skewed to low complexity; it reads QSDQSPQRSGSSPSPRARASRI. Arg294 is modified (omega-N-methylarginine). A compositionally biased stretch (low complexity) spans 435 to 448; sequence FFPRNPSSSSVNSV. The span at 480–497 shows a compositional bias: basic and acidic residues; that stretch reads HDPDAKEKPLHMPGGDGH. Helical transmembrane passes span 708–730, 736–773, 793–815, and 825–846; these read VAAVLFIYFAALSPAITFGGLLG, LMGVSELIVSTAVLGVLFSLLGAQPLLVVGFSGPLLVF, VWVGLWLVVFVLALVAAEGSFLV, and IFAFLISLIFIYETFHKLYKVF. The membrane (anion exchange) stretch occupies residues 708–1227; the sequence is VAAVLFIYFA…DEYNELHMPV (520 aa). Asn868 is a glycosylation site (N-linked (GlcNAc...) asparagine). Residues 888–905 form a helical membrane-spanning segment; it reads ALLSLILMLGTFLIAFFL. The Cytoplasmic portion of the chain corresponds to 906-920; that stretch reads RKFRNSRFLGGKARR. The next 5 helical transmembrane spans lie at 921–941, 975–997, 1023–1044, 1078–1123, and 1150–1186; these read IIGDFGIPISILVMVLVDYSI, PFPPWMMVAAAVPALLVLILIFM, LLLIGSLGGLCGLFGLPWLTAA, VTGV…IQLS, and MHLFTCIQLGCIALLWVVKSTAASLAFPFLLLLTVPL. Cys1160 is lipidated: S-palmitoyl cysteine.

This sequence belongs to the anion exchanger (TC 2.A.31) family. As to expression, expressed in the brain.

It localises to the cell membrane. It catalyses the reaction hydrogencarbonate(in) + chloride(out) = hydrogencarbonate(out) + chloride(in). Its activity is regulated as follows. Inhibited by 4,4'-diisothiocyanatostilbene-2,2'-disulfonic acid (DIDS). Its function is as follows. Sodium-independent anion exchanger which mediates the electroneutral exchange of chloride for bicarbonate ions across the cell membrane. May be involved in the regulation of intracellular pH, and the modulation of cardiac action potential. This is Anion exchange protein 3 (Slc4a3) from Mus musculus (Mouse).